Here is an 81-residue protein sequence, read N- to C-terminus: Putative defensin-like protein 52 (81 aa).

The first 20 residues, 1 to 20, serve as a signal peptide directing secretion; it reads MTFFLVIILAISSSNYNVLA. Disulfide bonds link Cys31–Cys55 and Cys41–Cys64.

Belongs to the DEFL family.

Its subcellular location is the secreted. This chain is Putative defensin-like protein 52, found in Arabidopsis thaliana (Mouse-ear cress).